The chain runs to 190 residues: Pyridoxal 5'-phosphate synthase subunit PdxT (190 aa).

Position 46-48 (46-48 (GES)) interacts with L-glutamine. C78 serves as the catalytic Nucleophile. L-glutamine-binding positions include R108 and 137 to 138 (IR). Active-site charge relay system residues include H174 and E176.

It belongs to the glutaminase PdxT/SNO family. In terms of assembly, in the presence of PdxS, forms a dodecamer of heterodimers. Only shows activity in the heterodimer.

It catalyses the reaction aldehydo-D-ribose 5-phosphate + D-glyceraldehyde 3-phosphate + L-glutamine = pyridoxal 5'-phosphate + L-glutamate + phosphate + 3 H2O + H(+). It carries out the reaction L-glutamine + H2O = L-glutamate + NH4(+). Its pathway is cofactor biosynthesis; pyridoxal 5'-phosphate biosynthesis. In terms of biological role, catalyzes the hydrolysis of glutamine to glutamate and ammonia as part of the biosynthesis of pyridoxal 5'-phosphate. The resulting ammonia molecule is channeled to the active site of PdxS. The protein is Pyridoxal 5'-phosphate synthase subunit PdxT of Chloroflexus aggregans (strain MD-66 / DSM 9485).